Here is a 403-residue protein sequence, read N- to C-terminus: Stearoyl-[acyl-carrier-protein] 9-desaturase 4, chloroplastic (403 aa).

The transit peptide at 1-44 (MALLLNSTMTVAMKQNPATAVSFMQTTCLGSSFSPPRHLQVSCV) directs the protein to the chloroplast. The Fe cation site is built by glutamate 140, glutamate 178, histidine 181, glutamate 231, glutamate 264, and histidine 267.

Belongs to the fatty acid desaturase type 2 family. Homodimer. It depends on Fe(2+) as a cofactor. As to expression, preferentially expressed in roots.

It localises to the plastid. The protein resides in the chloroplast. It catalyses the reaction octadecanoyl-[ACP] + 2 reduced [2Fe-2S]-[ferredoxin] + O2 + 2 H(+) = (9Z)-octadecenoyl-[ACP] + 2 oxidized [2Fe-2S]-[ferredoxin] + 2 H2O. The protein operates within lipid metabolism; fatty acid metabolism. Its function is as follows. Converts stearoyl-ACP to oleoyl-ACP by introduction of a cis double bond between carbons 9 and 10 of the acyl chain. The protein is Stearoyl-[acyl-carrier-protein] 9-desaturase 4, chloroplastic (S-ACP-DES4) of Arabidopsis thaliana (Mouse-ear cress).